Consider the following 570-residue polypeptide: Eukaryotic translation initiation factor 2A (570 aa).

2 WD repeats span residues 274–316 (EKKG…FDTI) and 318–358 (GPRN…EIIS). The disordered stretch occupies residues 468 to 526 (PPHLRKPLGGGGSAGPPSAAAPTPGNQNQRPAQPRANGNGNAPQPFRPQQSEQERKAFQ). Residues 482–492 (GPPSAAAPTPG) are compositionally biased toward low complexity. The span at 493–518 (NQNQRPAQPRANGNGNAPQPFRPQQS) shows a compositional bias: polar residues. Residues 519–541 (EQERKAFQLKKKVEEIKVLKQRV) adopt a coiled-coil conformation.

It belongs to the WD repeat EIF2A family.

Functions in the early steps of protein synthesis of a small number of specific mRNAs. Acts by directing the binding of methionyl-tRNAi to 40S ribosomal subunits. In contrast to the eIF-2 complex, it binds methionyl-tRNAi to 40S subunits in a codon-dependent manner, whereas the eIF-2 complex binds methionyl-tRNAi to 40S subunits in a GTP-dependent manner. The sequence is that of Eukaryotic translation initiation factor 2A from Caenorhabditis elegans.